The chain runs to 249 residues: Geranylgeranylglyceryl phosphate synthase (249 aa).

Positions 20 and 49 each coordinate Mg(2+). Sn-glycerol 1-phosphate is bound by residues 169–175, 200–201, and 222–223; these read YLDAGSG, GG, and GN.

It belongs to the GGGP/HepGP synthase family. Group II subfamily. As to quaternary structure, homohexamer. It depends on Mg(2+) as a cofactor.

It catalyses the reaction sn-glycerol 1-phosphate + (2E,6E,10E)-geranylgeranyl diphosphate = sn-3-O-(geranylgeranyl)glycerol 1-phosphate + diphosphate. Prenyltransferase that catalyzes the transfer of the geranylgeranyl moiety of geranylgeranyl diphosphate (GGPP) to the C3 hydroxyl of sn-glycerol-1-phosphate (G1P). This is Geranylgeranylglyceryl phosphate synthase from Spirosoma linguale (strain ATCC 33905 / DSM 74 / LMG 10896 / Claus 1).